Here is a 485-residue protein sequence, read N- to C-terminus: E3 ubiquitin-protein ligase TRIM58 (485 aa).

The segment at 15-59 adopts an RING-type zinc-finger fold; it reads CSVCLDFLQEPISVDCGHSFCLRCISEFCEKSDSAQGVYACPQCR. A B box-type zinc finger spans residues 90 to 131; it reads AGSRQCARHGEDLSHFCEEDQTMLCWVCDTSPEHRSHRTETL. Positions 95, 98, 117, and 123 each coordinate Zn(2+). The stretch at 192–241 forms a coiled coil; it reads LAQEEQLQLRRLEEEERATLQRLRDSRNRLAQQNKALKELAEELEERSQR. In terms of domain architecture, B30.2/SPRY spans 271–466; it reads DLKTVCRIPG…LPPMTEAAPG (196 aa).

Belongs to the TRIM/RBCC family. Expressed in erythroblasts.

It carries out the reaction S-ubiquitinyl-[E2 ubiquitin-conjugating enzyme]-L-cysteine + [acceptor protein]-L-lysine = [E2 ubiquitin-conjugating enzyme]-L-cysteine + N(6)-ubiquitinyl-[acceptor protein]-L-lysine.. The protein operates within protein modification; protein ubiquitination. Its function is as follows. E3 ubiquitin ligase induced during late erythropoiesis. Directly binds and ubiquitinates the intermediate chain of the microtubule motor dynein (DYNC1LI1/DYNC1LI2), stimulating the degradation of the dynein holoprotein complex. May participate in the erythroblast enucleation process through regulation of nuclear polarization. In Mus musculus (Mouse), this protein is E3 ubiquitin-protein ligase TRIM58 (Trim58).